Here is a 344-residue protein sequence, read N- to C-terminus: Ferrochelatase (344 aa).

Positions 214 and 295 each coordinate Fe cation.

The protein belongs to the ferrochelatase family.

It localises to the cytoplasm. The catalysed reaction is heme b + 2 H(+) = protoporphyrin IX + Fe(2+). The protein operates within porphyrin-containing compound metabolism; protoheme biosynthesis; protoheme from protoporphyrin-IX: step 1/1. Its function is as follows. Catalyzes the ferrous insertion into protoporphyrin IX. This chain is Ferrochelatase, found in Rhizobium johnstonii (strain DSM 114642 / LMG 32736 / 3841) (Rhizobium leguminosarum bv. viciae).